The sequence spans 211 residues: Protein-L-isoaspartate O-methyltransferase (211 aa).

Ser-62 is a catalytic residue.

This sequence belongs to the methyltransferase superfamily. L-isoaspartyl/D-aspartyl protein methyltransferase family.

It localises to the cytoplasm. It catalyses the reaction [protein]-L-isoaspartate + S-adenosyl-L-methionine = [protein]-L-isoaspartate alpha-methyl ester + S-adenosyl-L-homocysteine. Functionally, catalyzes the methyl esterification of L-isoaspartyl residues in peptides and proteins that result from spontaneous decomposition of normal L-aspartyl and L-asparaginyl residues. It plays a role in the repair and/or degradation of damaged proteins. This Shewanella baltica (strain OS195) protein is Protein-L-isoaspartate O-methyltransferase.